The chain runs to 148 residues: Large ribosomal subunit protein bL9 (148 aa).

This sequence belongs to the bacterial ribosomal protein bL9 family.

Functionally, binds to the 23S rRNA. The chain is Large ribosomal subunit protein bL9 from Chloroflexus aurantiacus (strain ATCC 29366 / DSM 635 / J-10-fl).